The sequence spans 1464 residues: DNA-directed RNA polymerase subunit beta' (1464 aa).

Residues cysteine 66, cysteine 68, cysteine 96, and cysteine 99 each coordinate Zn(2+). Residues aspartate 491, aspartate 493, and aspartate 495 each coordinate Mg(2+). Positions 838, 912, 919, and 922 each coordinate Zn(2+). The segment covering 1143-1200 (NDDDDDDYYDSDYYDYYDYSDDDDDYDDYDDYYYNYDDDENDNDNDYDYDYDYDYDYD) has biased composition (acidic residues). Residues 1143-1229 (NDDDDDDYYD…YDYDYDSDSD (87 aa)) are disordered. Residues 1204–1219 (HNSYSHNSYSPSSNDN) show a composition bias toward low complexity. Over residues 1220-1229 (YDYDYDSDSD) the composition is skewed to acidic residues.

This sequence belongs to the RNA polymerase beta' chain family. As to quaternary structure, the RNAP catalytic core consists of 2 alpha, 1 beta, 1 beta' and 1 omega subunit. When a sigma factor is associated with the core the holoenzyme is formed, which can initiate transcription. Mg(2+) is required as a cofactor. Requires Zn(2+) as cofactor.

The enzyme catalyses RNA(n) + a ribonucleoside 5'-triphosphate = RNA(n+1) + diphosphate. Functionally, DNA-dependent RNA polymerase catalyzes the transcription of DNA into RNA using the four ribonucleoside triphosphates as substrates. This chain is DNA-directed RNA polymerase subunit beta', found in Karelsulcia muelleri (strain GWSS) (Sulcia muelleri).